The sequence spans 616 residues: Dihydroxy-acid dehydratase (616 aa).

Asp-81 is a binding site for Mg(2+). Cys-122 is a binding site for [2Fe-2S] cluster. Residues Asp-123 and Lys-124 each contribute to the Mg(2+) site. Lys-124 bears the N6-carboxylysine mark. Cys-195 provides a ligand contact to [2Fe-2S] cluster. Residue Glu-491 coordinates Mg(2+). The Proton acceptor role is filled by Ser-517.

Belongs to the IlvD/Edd family. Homodimer. [2Fe-2S] cluster is required as a cofactor. The cofactor is Mg(2+).

It carries out the reaction (2R)-2,3-dihydroxy-3-methylbutanoate = 3-methyl-2-oxobutanoate + H2O. It catalyses the reaction (2R,3R)-2,3-dihydroxy-3-methylpentanoate = (S)-3-methyl-2-oxopentanoate + H2O. It functions in the pathway amino-acid biosynthesis; L-isoleucine biosynthesis; L-isoleucine from 2-oxobutanoate: step 3/4. Its pathway is amino-acid biosynthesis; L-valine biosynthesis; L-valine from pyruvate: step 3/4. Functionally, functions in the biosynthesis of branched-chain amino acids. Catalyzes the dehydration of (2R,3R)-2,3-dihydroxy-3-methylpentanoate (2,3-dihydroxy-3-methylvalerate) into 2-oxo-3-methylpentanoate (2-oxo-3-methylvalerate) and of (2R)-2,3-dihydroxy-3-methylbutanoate (2,3-dihydroxyisovalerate) into 2-oxo-3-methylbutanoate (2-oxoisovalerate), the penultimate precursor to L-isoleucine and L-valine, respectively. In Salmonella heidelberg (strain SL476), this protein is Dihydroxy-acid dehydratase.